We begin with the raw amino-acid sequence, 253 residues long: 5'/3'-nucleotidase SurE (253 aa).

The a divalent metal cation site is built by Asp-8, Asp-9, Ser-39, and Asn-92.

It belongs to the SurE nucleotidase family. A divalent metal cation serves as cofactor.

It localises to the cytoplasm. It carries out the reaction a ribonucleoside 5'-phosphate + H2O = a ribonucleoside + phosphate. The catalysed reaction is a ribonucleoside 3'-phosphate + H2O = a ribonucleoside + phosphate. The enzyme catalyses [phosphate](n) + H2O = [phosphate](n-1) + phosphate + H(+). Nucleotidase with a broad substrate specificity as it can dephosphorylate various ribo- and deoxyribonucleoside 5'-monophosphates and ribonucleoside 3'-monophosphates with highest affinity to 3'-AMP. Also hydrolyzes polyphosphate (exopolyphosphatase activity) with the preference for short-chain-length substrates (P20-25). Might be involved in the regulation of dNTP and NTP pools, and in the turnover of 3'-mononucleotides produced by numerous intracellular RNases (T1, T2, and F) during the degradation of various RNAs. This Escherichia fergusonii (strain ATCC 35469 / DSM 13698 / CCUG 18766 / IAM 14443 / JCM 21226 / LMG 7866 / NBRC 102419 / NCTC 12128 / CDC 0568-73) protein is 5'/3'-nucleotidase SurE.